A 220-amino-acid polypeptide reads, in one-letter code: PRA1 family protein B4 (220 aa).

The interval 1–27 (MASSAPPVLPISNPQTVPSAAPSSVES) is disordered. Over residues 12–27 (SNPQTVPSAAPSSVES) the composition is skewed to polar residues. The next 5 membrane-spanning stretches (helical) occupy residues 83–103 (YSYF…FSLV), 105–125 (HPFS…LYLF), 146–166 (GCLI…SVLV), 170–190 (MIGV…DLFL), and 196–216 (AATG…PAVI).

The protein belongs to the PRA1 family. In terms of assembly, interacts with PRA1B1, PRA1B2, PRA1B3, PRA1B5, PRA1B6 and PRA1E. Expressed in roots, lateral roots, lateral root caps, stomata and trichomes.

The protein localises to the endosome membrane. Its function is as follows. May be involved in both secretory and endocytic intracellular trafficking in the endosomal/prevacuolar compartments. The sequence is that of PRA1 family protein B4 (PRA1B4) from Arabidopsis thaliana (Mouse-ear cress).